Here is a 254-residue protein sequence, read N- to C-terminus: tRNA (guanine-N(1)-)-methyltransferase (254 aa).

S-adenosyl-L-methionine is bound by residues Gly115 and 135-140 (VGDFVL).

Belongs to the RNA methyltransferase TrmD family. In terms of assembly, homodimer.

The protein localises to the cytoplasm. It carries out the reaction guanosine(37) in tRNA + S-adenosyl-L-methionine = N(1)-methylguanosine(37) in tRNA + S-adenosyl-L-homocysteine + H(+). In terms of biological role, specifically methylates guanosine-37 in various tRNAs. This chain is tRNA (guanine-N(1)-)-methyltransferase, found in Francisella tularensis subsp. tularensis (strain FSC 198).